Reading from the N-terminus, the 513-residue chain is Histidine ammonia-lyase (513 aa).

Positions 144–146 form a cross-link, 5-imidazolinone (Ala-Gly); it reads ASG. Ser145 carries the post-translational modification 2,3-didehydroalanine (Ser).

The protein belongs to the PAL/histidase family. Contains an active site 4-methylidene-imidazol-5-one (MIO), which is formed autocatalytically by cyclization and dehydration of residues Ala-Ser-Gly.

It is found in the cytoplasm. The catalysed reaction is L-histidine = trans-urocanate + NH4(+). It functions in the pathway amino-acid degradation; L-histidine degradation into L-glutamate; N-formimidoyl-L-glutamate from L-histidine: step 1/3. The polypeptide is Histidine ammonia-lyase (Streptococcus sanguinis (strain SK36)).